The primary structure comprises 235 residues: MSNHLEAKMGDIADTVLLPGDPLRAKYIAETFLENPVCYNTVRNAFGYTGTYKGKRISVQGTGMGIPSISIYTNELISEYGVKTLFRVGTSGGMSPDVHVRDVVLAQAASTDSSIIHNTFGGGIYYAAISDFGLLDTAYHVAQDLKISVRVGNVLAEDRFYNDEMDRQKLVDYGVIATEMESTALFMLAAKYHVRALSVLTISNHLMTGESTTPEEREKSFNDMIRVALDTAAKA.

His-4 contacts a purine D-ribonucleoside. Residues Gly-20, Arg-24, Arg-43, and 87 to 90 (RVGT) contribute to the phosphate site. A purine D-ribonucleoside is bound by residues 179 to 181 (EME) and 203 to 204 (SN).

The protein belongs to the PNP/UDP phosphorylase family. In terms of assembly, homohexamer; trimer of homodimers.

It carries out the reaction a purine D-ribonucleoside + phosphate = a purine nucleobase + alpha-D-ribose 1-phosphate. The enzyme catalyses a purine 2'-deoxy-D-ribonucleoside + phosphate = a purine nucleobase + 2-deoxy-alpha-D-ribose 1-phosphate. Functionally, catalyzes the reversible phosphorolytic breakdown of the N-glycosidic bond in the beta-(deoxy)ribonucleoside molecules, with the formation of the corresponding free purine bases and pentose-1-phosphate. The protein is Purine nucleoside phosphorylase DeoD-type of Levilactobacillus brevis (strain ATCC 367 / BCRC 12310 / CIP 105137 / JCM 1170 / LMG 11437 / NCIMB 947 / NCTC 947) (Lactobacillus brevis).